The sequence spans 301 residues: Nucleotide-binding protein Rfer_1653 (301 aa).

15 to 22 (GMSGSGKS) contacts ATP. 64-67 (DVRT) contributes to the GTP binding site.

Belongs to the RapZ-like family.

Its function is as follows. Displays ATPase and GTPase activities. The protein is Nucleotide-binding protein Rfer_1653 of Albidiferax ferrireducens (strain ATCC BAA-621 / DSM 15236 / T118) (Rhodoferax ferrireducens).